The following is a 162-amino-acid chain: MSDLILGIGEYGVSKTPGSMVKTYALGSCVAVTMYEPNLKIAGMVHVALPESKLNTAKGEQCPGYFADLGVPLLFKEMVRLGCHARGRGLVVKMLGGAAVMAGNDTFNIGKRNILAVKKILWKLGMGPVAEDVGANYSRTVSLHVDTGLVNVSCPGRGQWQI.

Belongs to the CheD family.

The catalysed reaction is L-glutaminyl-[protein] + H2O = L-glutamyl-[protein] + NH4(+). Probably deamidates glutamine residues to glutamate on methyl-accepting chemotaxis receptors (MCPs), playing an important role in chemotaxis. In Syntrophotalea carbinolica (strain DSM 2380 / NBRC 103641 / GraBd1) (Pelobacter carbinolicus), this protein is Probable chemoreceptor glutamine deamidase CheD.